The primary structure comprises 139 residues: MRIMGLDVGSKTVGVAISDPLGFTAQGLEIIRINEDKQDFGFDRLAELVKQYQVDRFVIGLPKNMNNTSGPRVEASKAYGDKIEELFHIPVSYQDERLTTVEAERMLIEQADISRGKRKKVIDKLAAQLILQNYLDCNY.

The protein belongs to the YqgF nuclease family.

It localises to the cytoplasm. In terms of biological role, could be a nuclease involved in processing of the 5'-end of pre-16S rRNA. In Streptococcus equi subsp. equi (strain 4047), this protein is Putative pre-16S rRNA nuclease.